A 192-amino-acid polypeptide reads, in one-letter code: ATP-dependent Clp protease proteolytic subunit 1 (192 aa).

The active-site Nucleophile is Ser92. His117 is a catalytic residue.

It belongs to the peptidase S14 family. As to quaternary structure, fourteen ClpP subunits assemble into 2 heptameric rings which stack back to back to give a disk-like structure with a central cavity, resembling the structure of eukaryotic proteasomes.

The protein resides in the cytoplasm. The catalysed reaction is Hydrolysis of proteins to small peptides in the presence of ATP and magnesium. alpha-casein is the usual test substrate. In the absence of ATP, only oligopeptides shorter than five residues are hydrolyzed (such as succinyl-Leu-Tyr-|-NHMec, and Leu-Tyr-Leu-|-Tyr-Trp, in which cleavage of the -Tyr-|-Leu- and -Tyr-|-Trp bonds also occurs).. In terms of biological role, cleaves peptides in various proteins in a process that requires ATP hydrolysis. Has a chymotrypsin-like activity. Plays a major role in the degradation of misfolded proteins. The protein is ATP-dependent Clp protease proteolytic subunit 1 of Chlamydia trachomatis serovar D (strain ATCC VR-885 / DSM 19411 / UW-3/Cx).